We begin with the raw amino-acid sequence, 388 residues long: Quinolone resistance protein NorA (388 aa).

12 helical membrane passes run 5–25, 42–62, 69–89, 99–119, 129–149, 157–177, 201–221, 239–259, 269–289, 293–313, 331–351, and 355–375; these read IFVLYFNIFLIFLGIGLVIPV, LLVAAFALSQMIISPFGGTLA, LIICIGLILFSVSEFMFAVGH, VIGGMSAGMVMPGVTGLIADI, FGYMSAIINSGFILGPGIGGF, MPFYFAGALGILAFIMSIVLI, WKVFITPVILTLVLSLGLSAF, DISIAITGGGIFGALFQIYFF, LTFIAWSLLYSVVVLILLVFA, WSIMLISFVVFIGFDMIRPAI, LNSTFTSMGNFIGPLIAGALF, and IEAPIYMAIGVSLAGVVIVLI.

The protein belongs to the major facilitator superfamily. TCR/Tet family.

The protein resides in the cell membrane. Involved in quinolone resistance. May constitute a membrane-associated active efflux pump of hydrophilic quinolones. In Staphylococcus aureus (strain MSSA476), this protein is Quinolone resistance protein NorA (norA).